The following is a 173-amino-acid chain: Regulator of ribonuclease activity A (173 aa).

The protein belongs to the RraA family. As to quaternary structure, homotrimer. Binds to both RNA-binding sites in the C-terminal region of Rne and to RhlB.

The protein resides in the cytoplasm. Globally modulates RNA abundance by binding to RNase E (Rne) and regulating its endonucleolytic activity. Can modulate Rne action in a substrate-dependent manner by altering the composition of the degradosome. Modulates RNA-binding and helicase activities of the degradosome. This is Regulator of ribonuclease activity A from Vibrio vulnificus (strain YJ016).